Consider the following 349-residue polypeptide: Anthranilate phosphoribosyltransferase (349 aa).

Residues G94, 97–98, T102, 104–107, 122–130, and S134 contribute to the 5-phospho-alpha-D-ribose 1-diphosphate site; these read GD, NIST, and KHGNRSVSS. G94 contributes to the anthranilate binding site. S106 contributes to the Mg(2+) binding site. N125 serves as a coordination point for anthranilate. R180 is an anthranilate binding site. Residues D239 and E240 each coordinate Mg(2+).

Belongs to the anthranilate phosphoribosyltransferase family. Homodimer. Requires Mg(2+) as cofactor.

It catalyses the reaction N-(5-phospho-beta-D-ribosyl)anthranilate + diphosphate = 5-phospho-alpha-D-ribose 1-diphosphate + anthranilate. It functions in the pathway amino-acid biosynthesis; L-tryptophan biosynthesis; L-tryptophan from chorismate: step 2/5. In terms of biological role, catalyzes the transfer of the phosphoribosyl group of 5-phosphorylribose-1-pyrophosphate (PRPP) to anthranilate to yield N-(5'-phosphoribosyl)-anthranilate (PRA). This chain is Anthranilate phosphoribosyltransferase, found in Trichlorobacter lovleyi (strain ATCC BAA-1151 / DSM 17278 / SZ) (Geobacter lovleyi).